An 876-amino-acid chain; its full sequence is Valine--tRNA ligase (876 aa).

Residues 44–54 (PNVTGKLHLGH) carry the 'HIGH' region motif. A 'KMSKS' region motif is present at residues 520–524 (KMSKS). Residue Lys523 participates in ATP binding. Residues 805–876 (LEGLIDMDKE…VKARIEQLKA (72 aa)) are a coiled coil.

The protein belongs to the class-I aminoacyl-tRNA synthetase family. ValS type 1 subfamily. As to quaternary structure, monomer.

It is found in the cytoplasm. The enzyme catalyses tRNA(Val) + L-valine + ATP = L-valyl-tRNA(Val) + AMP + diphosphate. Catalyzes the attachment of valine to tRNA(Val). As ValRS can inadvertently accommodate and process structurally similar amino acids such as threonine, to avoid such errors, it has a 'posttransfer' editing activity that hydrolyzes mischarged Thr-tRNA(Val) in a tRNA-dependent manner. This is Valine--tRNA ligase from Staphylococcus aureus (strain JH1).